Reading from the N-terminus, the 339-residue chain is UDP-N-acetylenolpyruvoylglucosamine reductase (339 aa).

One can recognise an FAD-binding PCMH-type domain in the interval 18-189 (GVEVKAKWFA…LRVRFALNRV (172 aa)). R166 is a catalytic residue. Residue S239 is the Proton donor of the active site. E335 is a catalytic residue.

It belongs to the MurB family. It depends on FAD as a cofactor.

The protein resides in the cytoplasm. The catalysed reaction is UDP-N-acetyl-alpha-D-muramate + NADP(+) = UDP-N-acetyl-3-O-(1-carboxyvinyl)-alpha-D-glucosamine + NADPH + H(+). The protein operates within cell wall biogenesis; peptidoglycan biosynthesis. In terms of biological role, cell wall formation. The protein is UDP-N-acetylenolpyruvoylglucosamine reductase of Pseudomonas fluorescens (strain ATCC BAA-477 / NRRL B-23932 / Pf-5).